We begin with the raw amino-acid sequence, 144 residues long: Transcription antitermination protein NusB (144 aa).

This sequence belongs to the NusB family.

Involved in transcription antitermination. Required for transcription of ribosomal RNA (rRNA) genes. Binds specifically to the boxA antiterminator sequence of the ribosomal RNA (rrn) operons. The protein is Transcription antitermination protein NusB of Blochmanniella pennsylvanica (strain BPEN).